A 194-amino-acid polypeptide reads, in one-letter code: Fe/S biogenesis protein NfuA (194 aa).

Positions 151 and 154 each coordinate [4Fe-4S] cluster.

Belongs to the NfuA family. As to quaternary structure, homodimer. [4Fe-4S] cluster is required as a cofactor.

Functionally, involved in iron-sulfur cluster biogenesis. Binds a 4Fe-4S cluster, can transfer this cluster to apoproteins, and thereby intervenes in the maturation of Fe/S proteins. Could also act as a scaffold/chaperone for damaged Fe/S proteins. In Mannheimia succiniciproducens (strain KCTC 0769BP / MBEL55E), this protein is Fe/S biogenesis protein NfuA.